A 1116-amino-acid polypeptide reads, in one-letter code: Auxin response factor 21 (1116 aa).

A DNA-binding region (TF-B3) is located at residues 132–234; it reads FCKTLTASDT…QLLLGIRRAN (103 aa). The tract at residues 763-812 is disordered; that stretch reads KTDDVPSTSTSPSTNSNPVLLQSIPSSSKNQSLTTAGKTSQSSVVLGPTI. Residues 768–780 show a composition bias toward low complexity; sequence PSTSTSPSTNSNP. The segment covering 781 to 806 has biased composition (polar residues); it reads VLLQSIPSSSKNQSLTTAGKTSQSSV. In terms of domain architecture, PB1 spans 998-1082; the sequence is RTYTKVHKRG…RCIRILSPQE (85 aa).

The protein belongs to the ARF family. In terms of assembly, homodimers and heterodimers. In terms of tissue distribution, expressed in roots, culms, leaves and young panicles.

Its subcellular location is the nucleus. In terms of biological role, auxin response factors (ARFs) are transcriptional factors that bind specifically to the DNA sequence 5'-TGTCTC-3' found in the auxin-responsive promoter elements (AuxREs). The protein is Auxin response factor 21 (ARF21) of Oryza sativa subsp. japonica (Rice).